Here is a 275-residue protein sequence, read N- to C-terminus: Pyridoxal phosphate homeostasis protein (275 aa).

At Ser6 the chain carries Phosphoserine. N6-(pyridoxal phosphate)lysine is present on Lys47. Phosphotyrosine is present on Tyr69. Position 125 is an N6-succinyllysine (Lys125). 2 positions are modified to phosphoserine: Ser226 and Ser244. A compositionally biased stretch (basic and acidic residues) spans 251 to 263; sequence DYSKKPTPDKCAA. Residues 251–275 form a disordered region; the sequence is DYSKKPTPDKCAADVKAPLEVAQEH.

Belongs to the pyridoxal phosphate-binding protein YggS/PROSC family. In terms of tissue distribution, ubiquitous.

Its function is as follows. Pyridoxal 5'-phosphate (PLP)-binding protein, which may be involved in intracellular homeostatic regulation of pyridoxal 5'-phosphate (PLP), the active form of vitamin B6. This Homo sapiens (Human) protein is Pyridoxal phosphate homeostasis protein.